We begin with the raw amino-acid sequence, 610 residues long: Propanediol dehydratase-reactivating factor large subunit (610 aa).

Residue 11–13 coordinates ATP; the sequence is NSS. The Mg(2+) site is built by T105, D166, and D183. ATP is bound by residues 459 to 462, 557 to 558, and R591; these read EEIK and GS.

This sequence belongs to the DdrA/PduG family. As to quaternary structure, forms a heterotetramer PduG(2)/PduH(2). Requires Mg(2+) as cofactor.

The protein resides in the bacterial microcompartment. It catalyses the reaction ATP + H2O = ADP + phosphate + H(+). Its pathway is polyol metabolism; 1,2-propanediol degradation. In terms of biological role, large subunit of the propanediol dehydratase-reactivating factor (DDR), which reactivates suicidally inhibited adenosylcobalamin-dependent propanediol dehydratase (diol dehydratase, DDH) found in the bacterial microcompartment (BMC) dedicated to 1,2-propanediol (1,2-PD) degradation. Reactivates inactivated DDH in the presence of ATP, Mg(2+) and free adenosylcobalamin (AdoCbl), by mediating the exchange of the tightly bound damaged cofactor AdoCbl for a free intact one. This subunit contains the adenosine nucleotide binding site. Functionally, the 1,2-PD-specific bacterial microcompartment (BMC) concentrates low levels of 1,2-PD catabolic enzymes, concentrates volatile reaction intermediates thus enhancing pathway flux and keeps the level of toxic, mutagenic propionaldehyde low. The protein is Propanediol dehydratase-reactivating factor large subunit of Salmonella typhimurium (strain LT2 / SGSC1412 / ATCC 700720).